A 153-amino-acid chain; its full sequence is Two-component response regulator ARR17 (153 aa).

In terms of domain architecture, Response regulatory spans 21-149 (HVLAVDDNLI…DVEKLKCHLL (129 aa)). Position 82 is a 4-aspartylphosphate (Asp-82).

Belongs to the ARR family. Type-A subfamily. Two-component system major event consists of a His-to-Asp phosphorelay between a sensor histidine kinase (HK) and a response regulator (RR). In plants, the His-to-Asp phosphorelay involves an additional intermediate named Histidine-containing phosphotransfer protein (HPt). This multistep phosphorelay consists of a His-Asp-His-Asp sequential transfer of a phosphate group between first a His and an Asp of the HK protein, followed by the transfer to a conserved His of the HPt protein and finally the transfer to an Asp in the receiver domain of the RR protein.

It is found in the nucleus. Functionally, functions as a response regulator involved in His-to-Asp phosphorelay signal transduction system. Phosphorylation of the Asp residue in the receiver domain activates the ability of the protein to promote the transcription of target genes. Type-A response regulators seem to act as negative regulators of the cytokinin signaling. This Arabidopsis thaliana (Mouse-ear cress) protein is Two-component response regulator ARR17 (ARR17).